The primary structure comprises 299 residues: Prohibitin-2 (299 aa).

Ala-2 bears the N-acetylalanine mark. The interval 19 to 49 (MGTALKLLLGAGAVAYGVRESVFTVEGGHRA) is necessary for transcriptional repression. Phosphotyrosine is present on Tyr-128. N6-acetyllysine is present on Lys-147. Residues 150 to 174 (ASQLITQRAQVSLLIRRELTERAKD) are necessary for transcriptional repression. Position 151 is a phosphoserine (Ser-151). The stretch at 190-238 (SREYTAAVEAKQVAQQEAQRAQFLVEKAKQEQRQKIVQAEGEAEAAKML) forms a coiled coil. 4 positions are modified to N6-acetyllysine: Lys-200, Lys-236, Lys-250, and Lys-262.

It belongs to the prohibitin family. As to quaternary structure, the mitochondrial prohibitin complex consists of two subunits (PHB1 and PHB2), assembled into a membrane-associated ring-shaped supercomplex of approximately 1 mDa. Interacts with ESR1, HDAC1 and HDAC5. Interacts with ZNF703. Interacts with STOML2. Interacts with ARFGEF3. Interacts with SPHK2. Interacts with COX4I1; the interaction associates PHB2 with COX. Interacts with MAP1LC3B (membrane-bound form LC3-II); the interaction is direct and upon mitochondrial depolarization and proteasome-dependent outer membrane rupture. Interacts with IGFBP6 (via C-terminal domain). Interacts with CLPB. Interacts with CD86 (via cytoplasmic domain); the interactions increases after priming with CD40. Interacts with AFG3L2. Interacts with DNAJC19. Interacts with AKT2; this interaction may be important for myogenic differentiation. Post-translationally, phosphorylated. Tyrosine phosphorylation is indirectly stimulated by IGFBP6. Widely expressed in different tissues.

The protein resides in the mitochondrion inner membrane. The protein localises to the cytoplasm. It localises to the nucleus. It is found in the cell membrane. Its function is as follows. Protein with pleiotropic attributes mediated in a cell-compartment- and tissue-specific manner, which include the plasma membrane-associated cell signaling functions, mitochondrial chaperone, and transcriptional co-regulator of transcription factors and sex steroid hormones in the nucleus. In terms of biological role, in the mitochondria, together with PHB, forms large ring complexes (prohibitin complexes) in the inner mitochondrial membrane (IMM) and functions as a chaperone protein that stabilizes mitochondrial respiratory enzymes and maintains mitochondrial integrity in the IMM, which is required for mitochondrial morphogenesis, neuronal survival, and normal lifespan. The prohibitin complex, with DNAJC19, regulates cardiolipin remodeling and the protein turnover of OMA1 in a cardiolipin-binding manner. Also regulates cytochrome-c oxidase assembly (COX) and mitochondrial respiration. Binding to sphingoid 1-phosphate (SPP) modulates its regulator activity. Has a key role of mitophagy receptor involved in targeting mitochondria for autophagic degradation. Involved in mitochondrial-mediated antiviral innate immunity, activates RIG-I-mediated signal transduction and production of IFNB1 and pro-inflammatory cytokine IL6. In the nucleus, serves as transcriptional co-regulator. Acts as a mediator of transcriptional repression by nuclear hormone receptors via recruitment of histone deacetylases. Functions as an estrogen receptor (ER)-selective coregulator that potentiates the inhibitory activities of antiestrogens and represses the activity of estrogens. Competes with NCOA1 for modulation of ER transcriptional activity. Functionally, in the plasma membrane, is involved in IGFBP6-induced cell migration. Cooperates with CD86 to mediate CD86-signaling in B lymphocytes that regulates the level of IgG1 produced through the activation of distal signaling intermediates. Upon CD40 engagement, required to activate NF-kappa-B signaling pathway via phospholipase C and protein kinase C activation. This Mus musculus (Mouse) protein is Prohibitin-2.